A 363-amino-acid polypeptide reads, in one-letter code: Ribosomal RNA large subunit methyltransferase M (363 aa).

S-adenosyl-L-methionine-binding positions include Ser-190, 223 to 226, Asp-242, Asp-262, and Asp-279; that span reads CPGG. The active-site Proton acceptor is the Lys-308.

Belongs to the class I-like SAM-binding methyltransferase superfamily. RNA methyltransferase RlmE family. RlmM subfamily. In terms of assembly, monomer.

It is found in the cytoplasm. It catalyses the reaction cytidine(2498) in 23S rRNA + S-adenosyl-L-methionine = 2'-O-methylcytidine(2498) in 23S rRNA + S-adenosyl-L-homocysteine + H(+). Its function is as follows. Catalyzes the 2'-O-methylation at nucleotide C2498 in 23S rRNA. The polypeptide is Ribosomal RNA large subunit methyltransferase M (Vibrio vulnificus (strain CMCP6)).